The primary structure comprises 3598 residues: MEPGILIDERQHIQKKTFTKWINSHLIDTQCTPVKDLFLDLRDGHRLLALLSTLTQTNLKPEKGRMRVHHINNLNKVITEIQQHGVKLVNISSDDIVGGNAKLTLGLIWLIALEFNGQHLVKSHSSNGVEKSLLAWARQYTEPHGLQLNDFSSSWSDGRAFLMILDAHVEELNLQAALQQHALKRLHLAFDLAHRHFKIEKLLDAEDVHTHKPDNKSIQMYVMCLYHAMESMRTRQQEQEQDEGQDQDPGRVPCTSITDLDEVPLDNDQTSLGLYTSDSAGSMEQRSSGELKTHSMRPLSTATNASVEISGYQSALEAVLTLLLEDEQLLSQNLPDPQDFQTAKLQFHENESFMLKLTEHQEYVGEALEEGSNLINESQKAGAGLSQEDQNEVRQQMVLLNERWETLRLRALDVQAKILMRLAEFQKQKLEQLRQFLTSVEDRISHMSDIGPTLEEAEKQLLEAQKLKADLSEQQELVDSLSSMVVIVNDTSGNFNDLEDRLSALGERWSHVVKWSDLRKEKLQQYKCISRWLDAREQDLKLMESRDVTDVGGITQRINELNYCAKDLLELQRYLIDLRQMVAATLQDGDDKGERVLIQLESYEDRLDALKQIVEVQTVRIETKGFNFGRDRASYDDSRVVRPEGWVDYQMIIRFGEDDSQEDDDEHDLASKKRKLRNADNFNALENHIMEHFGYVQEVEQKLQQLQRQSLRQQCELLKELQAENSRRCGTLPELKKLYEVCELEDPSRNLLLEETHIKQLEQRYANLSQKLSSQQSESHTLLAKEKYYNSLTGFKLVLADSRDWYKQHAGSASGNELEQRLSHMESLASEISEAKTATEELDDNLIEWKQDFGLFYDSWHDMKQALQALIQQRGGESLSRQLKQIQDFVTKVSNQKVRVSNLEVMQEQQHFLNQLLDEMESLRLTYDNIPKHLIGEELQTAWNRLPEQLNERVIKQTTAIENLNHFAAEYNAIIAMLRSAADSKLNGSDGASSQDLRKLEIDVISARNFSEILIKEAEPAQKESLQSQIRALNTLYDQVEQVHREKKEQQTVLQSHIDLIQLRLKETDQWLTDLESNTPKSGISDIVNSNELFQSKSRFQTLKETCERETTQFRDLNERGGELLLQMDELQDQDRESRYGSLAKQFTRINARWTEVTELVYAKTALLEHISTQLGEFKKFMVSETGYLDKLENKIRNTPENAADAEEIMEELDDLENVLRSHSEEWLDKIQEIGNELIDNEFMADSIRRDIDETVQRWTQLQQQAKKRTELLEQKVSEAEQSEKCIVQFEKWLTRVDDILSDHLDNDVTIVDQPEEFQRLAHEFVANEKNFKEISELIDEHTRNGKVGAANRLQEQLNLMEVRFKYCQAKLSKCTAIQHSYESRLNRAYTDLRNVERSTEVVDVASAGPNTVQTQYQKCLQIYRTLSEIKSEIESTIKTGRRVCEDRYTKSPKQLSQRIDALKHLYNTLGENVTQSKATLERLLTLARQLEECFDSADNLIRRFESPQEVHDRNSILLEFEDVLRRCEDHYNEYNKSCDQSCMVETRQRIDGLKATYHKLTSADIIKRLTEMKTTLQNLDNISLETLRAMEHDLKEINVPSNPEIEKLQQQVIAIVVDVLKTRFNEATTLAARNTSSPDNDDTEIVVVSDTVRQRRARTPQSGESPSSAHTSSSESPTKGVENSPGAVGDQVMPDLLPPQTFRLAESSTLFSQISLNPQKVTNTPPPKPAKTKRKAPSSPAQVVEIRVKNIQNDKMSVQNIDLEPQQGEIVDTVNILESVEPFVPEYVETVQIVDLSEDSDSSVRVDSQGKEMRRSKSKHSLNETPLPKVSDNDEDSAEQEEDLLRPSAENTSTPFLRVEKRRISFDEKRKRVANERDILRDSEEEEPKTPDTPRAAQVSKPKRWRQLQPEMDALEPESPGRDSFYSPDKESGFDAEPLVFSDDEDIPRFSLEMTSTIDSDSDTSRIMTPSTKNPNPFLSKVLESLSSPVDDSNVTLKSPISEEQPQNLDDRVREFDKQAKQMIYKLKLTKAKIEQCHESEAEDLRLLIAPDAATLISQGDSLVLETHGRQGSISRLVMRTQIILREQFREVQQARSKTSGSGAPAPPLDSVNIEELVTKGLRRINVLIEKTVDLKSSTDLEKRMEDINERHDDLQVIVSAIGKNAQMPKVTPLMMNEIEKTKNNLIAHADSIELSLTELRNGPRISNGKERPDASSAATMSCRSEYNNEPSGTGALAGSFDKSVLQISDWLTWEQNMIKIQSVLVDDGDAVRLAIEKQEKVLRELKMKKPQLNELVHTAEVLKGDVKRQQLQEKELKQFSLAPHCSADLDYMRCCLKVTRLREHWDETSQCVLQRAAQLKNMLSDSQRFEAKRLELEKWLARMEQRAERMGTIATTADILEAQQKEQKSFHAELHQNKQHFDIFNELTQKLIAVYPNDDTTRIKKMTEVINQRYANLNSGVINRGKQLHAAVHSLQSFDRAMDQFLAFLSETETLCENAESDIERNPLMFKDLQSEIETHRVVYDRLDGTGRKLLGSLTSQEDAVMLQRRLDEMNQRWNNLKSKSIAIRNRLESNSEHWNALLLSLRELTEWVIRKDTELSTLGLGPVRGDAVSLQKQLDDHKAFRRQLEDKRPIVESNLTSGRQYIANEAAVSDTSDTEANHDSDSRYMSAEEQSRELTRSIRREVGKLSEQWNNLIDRSDNWKHRLDEYMTKMRQFQKILEDLSSRVALAEQTKTSWLPPSSVGEANEQMQQLQRLRDKMTTASALLDDCNEQQSFFTANQVLVPTPCLSKLEDLNTRMKLLQIAMDERQKVLCQAGAQQTHENGDDGRTTSNSGTIGPLPNLGQSVKPPWERATTAANVPYYIDHERETTHWDHPEMIELMKGLADLNEIRFSAYRTAMKLRSVQKRLALDRISMSTACESFDRHGLRAQNDKLIDIPDMTTVLHSLYVTIDKIDLTLMLDLAINWILNVYDSQRTGQIRVLSFKVGLVLLCKGHLEEKYRYLFRLVADTDRRADQRRLGLLLHDCIQVPRQLGEVAAFGGSNIEPSVRSCLEQAGISQEAIDGNQDISIELQHFLGWLQHEPQSLVWLPVLHRLAAAEAAKHQAKCNICKEYPIVGFRYRCLKCFNFDMCQKCFFFGRNAKNHKLTHPMHEYCTTTTSTEDVRDFTRALKNKFKSRKYFKKHPRVGYLPVQSVLEGDALESPAPSPQHTTHQLQNDMHSRLEMYASRLAQVEYGGTGSNSTPDSDDEHQLIAQYCQALPGTSNGSAPKSPVQVMAAMDAEQREELEAIIRDLEEENANLQAEYQQLCSKEQSGMPEDSNGMQHSSSSMTGLSGQGEQGQDMMAEAKLLRQHKGRLEARMQILEDHNRQLEAQLQRLRQLLDEPNGGGSSATSSGLPSAPGSALNSKPNTLQTRSVTASQLNTDSPAKMNQQNGHYEHNSKGIMLPGMNSEIQQQHAQLASLAAKHHQHQLSGALNALHQQQQQQLQQQPPQQQRSMMTGNGGMDISGGMQTSGGYLGDDGRPPPPPHSSLMQQQHQQHLNENSSGLVTVITEQELESINDDLEDSSSSNTTNTTTTTTTTATTEKTCVELQK.

The actin-binding stretch occupies residues 1–230 (MEPGILIDER…YVMCLYHAME (230 aa)). 2 Calponin-homology (CH) domains span residues 12 to 116 (HIQK…LEFN) and 127 to 230 (NGVE…HAME). Positions 233 to 297 (RTRQQEQEQD…SGELKTHSMR (65 aa)) are disordered. Polar residues predominate over residues 267-286 (NDQTSLGLYTSDSAGSMEQR). Spectrin repeat units lie at residues 307–420 (VEIS…KILM), 423–525 (AEFQ…KLQQ), 851–963 (QDFG…AIEN), 1056–1170 (SHID…LLEH), 1173–1275 (TQLG…LLEQ), and 1381–1483 (SYES…TLER). Disordered stretches follow at residues 1633 to 1696 (ARNT…VMPD), 1716 to 1742 (SLNP…SSPA), 1799 to 1854 (EDSD…ENTS), 1878 to 1941 (RDIL…EPLV), and 2204 to 2233 (GPRI…NEPS). A compositionally biased stretch (low complexity) spans 1663–1679 (SGESPSSAHTSSSESPT). Residues 1803 to 1816 (SSVRVDSQGKEMRR) are compositionally biased toward basic and acidic residues. A phosphoserine mark is found at Ser1832 and Ser1838. A compositionally biased stretch (acidic residues) spans 1834–1843 (NDEDSAEQEE). Residues 1878-1893 (RDILRDSEEEEPKTPD) show a composition bias toward basic and acidic residues. A compositionally biased stretch (polar residues) spans 2218–2233 (SAATMSCRSEYNNEPS). Spectrin repeat units lie at residues 2237-2363 (ALAG…QLKN), 2366-2472 (SDSQ…QLHA), 2475-2576 (HSLQ…RLES), 2579-2712 (EHWN…RLDE), and 2715-2819 (TKMR…VLCQ). The segment at 2655 to 2679 (VSDTSDTEANHDSDSRYMSAEEQSR) is disordered. Positions 2822–2852 (AQQTHENGDDGRTTSNSGTIGPLPNLGQSVK) are disordered. Residues 2849–2882 (QSVKPPWERATTAANVPYYIDHERETTHWDHPEM) form the WW domain. The ZZ-type zinc finger occupies 3107–3163 (KHQAKCNICKEYPIVGFRYRCLKCFNFDMCQKCFFFGRNAKNHKLTHPMHEYCTTTT). The Zn(2+) site is built by Cys3112, Cys3115, Cys3127, Cys3130, Cys3136, Cys3139, His3149, and His3153. Ser3207 bears the Phosphoserine mark. Disordered regions lie at residues 3316–3344 (EQSG…GEQG), 3387–3449 (DEPN…KGIM), 3483–3545 (LHQQ…QQHL), and 3560–3598 (ELES…ELQK). 2 stretches are compositionally biased toward polar residues: residues 3325-3337 (NGMQ…MTGL) and 3408-3439 (ALNS…QQNG). Over residues 3485–3499 (QQQQQQLQQQPPQQQ) the composition is skewed to low complexity. Positions 3505-3523 (GNGGMDISGGMQTSGGYLG) are enriched in gly residues. A compositionally biased stretch (low complexity) spans 3534-3545 (SSLMQQQHQQHL). Acidic residues predominate over residues 3560-3570 (ELESINDDLED). Positions 3571 to 3589 (SSSSNTTNTTTTTTTTATT) are enriched in low complexity.

In terms of assembly, component of the dystrophin associated protein complex (DAPC). Interacts with Dg, via the Dg WW domain binding sites. In terms of tissue distribution, isoform A, isoform F and isoform G are expressed in the midgut endoderm of stage 12 embryos. In stage 16 embryos, expression is also seen in the pericardial cells, cells at the ectoderm segmental border and cells along the midline of the CNS. During embryogenesis, isoform A is also expressed in the visceral mesoderm, muscle attachment sites, mesectodermal cells at the midline, the gut, and throughout muscle fibers. In larvae, isoform A is found in all muscle fibers, but not detectable in the brain or neuropil.

The protein resides in the cell membrane. Its subcellular location is the sarcolemma. The protein localises to the cytoplasm. It localises to the cytoskeleton. In terms of biological role, required for the maintenance of appropriate synaptic retrograde communication and the stabilization of muscle cell architecture or physiology. Both det and Dg are required for maintenance of early dpp signaling in the presumptive crossvein. Isoform A is not required to maintain muscle integrity, but plays a role in neuromuscular homeostasis by regulating neurotransmitter release. May play a role in anchoring the cytoskeleton to the plasma membrane. The protein is Dystrophin, isoforms A/C/F/G/H (Dys) of Drosophila melanogaster (Fruit fly).